The sequence spans 247 residues: Granulin (247 aa).

The protein belongs to the polyhedrin family.

In terms of biological role, component of the virus occlusion bodies, which are large proteinaceous structures, that protect the virus from the outside environment for extended periods until they are ingested by insect larvae. The protein is Granulin of Agrotis segetum granulosis virus (AsGV).